The following is a 322-amino-acid chain: MLASVRVNQLQRLLLSARRLSSSPIIPPSRLLHQRLFSTSDTDASAASFSSSHPKIQTLEGKASNKSRSTSSTTSLNEDELAKFSAIADTWWHSEGPFKPLHQMNPTRLAFIRSTLCRHFSKDPSSAKPFEGLKFIDIGCGGGLLSEPLARMGATVTGVDAVDKNVKIARLHADMDPVTSTIEYLCTTAEKLADEGRKFDAVLSLEVIEHVANPAEFCKSLSALTIPNGATVLSTINRTMRAYASTIVGAEYILRWLPKGTHQWSSFVTPEEMSMILQRASVDVKEIAGFVYNPITGRWLLSDDISVNYIAYGTKRKDLGDI.

The N-terminal 37 residues, 1 to 37, are a transit peptide targeting the mitochondrion; the sequence is MLASVRVNQLQRLLLSARRLSSSPIIPPSRLLHQRLF. The interval 46-75 is disordered; the sequence is AASFSSSHPKIQTLEGKASNKSRSTSSTTS. S-adenosyl-L-methionine contacts are provided by arginine 108, glycine 139, aspartate 160, and leucine 205. Mg(2+) contacts are provided by glutamate 206, glutamate 209, and histidine 210.

Belongs to the class I-like SAM-binding methyltransferase superfamily. UbiG/COQ3 family. In terms of assembly, component of a multi-subunit COQ enzyme complex. The cofactor is Mg(2+).

It is found in the mitochondrion inner membrane. The enzyme catalyses a 3,4-dihydroxy-5-(all-trans-polyprenyl)benzoate + S-adenosyl-L-methionine = a 4-hydroxy-3-methoxy-5-(all-trans-polyprenyl)benzoate + S-adenosyl-L-homocysteine + H(+). It catalyses the reaction a 3-demethylubiquinone + S-adenosyl-L-methionine = a ubiquinone + S-adenosyl-L-homocysteine. It carries out the reaction a 3-demethylubiquinol + S-adenosyl-L-methionine = a ubiquinol + S-adenosyl-L-homocysteine + H(+). It participates in cofactor biosynthesis; ubiquinone biosynthesis. Its function is as follows. O-methyltransferase required for two non-consecutive steps during ubiquinone biosynthesis. Catalyzes the 2 O-methylation of 3,4-dihydroxy-5-(all-trans-polyprenyl)benzoic acid into 4-hydroxy-3-methoxy-5-(all-trans-polyprenyl)benzoic acid. Also catalyzes the last step of ubiquinone biosynthesis by mediating methylation of 3-demethylubiquinone into ubiquinone. Also able to mediate the methylation of 3-demethylubiquinol into ubiquinol. In Arabidopsis thaliana (Mouse-ear cress), this protein is Ubiquinone biosynthesis O-methyltransferase, mitochondrial.